The following is a 224-amino-acid chain: 7-cyano-7-deazaguanine synthase (224 aa).

8–18 (CSGGLDSTVAA) is a binding site for ATP. Residues cysteine 190, cysteine 198, cysteine 201, and cysteine 204 each contribute to the Zn(2+) site.

Belongs to the QueC family. Zn(2+) serves as cofactor.

The enzyme catalyses 7-carboxy-7-deazaguanine + NH4(+) + ATP = 7-cyano-7-deazaguanine + ADP + phosphate + H2O + H(+). It functions in the pathway purine metabolism; 7-cyano-7-deazaguanine biosynthesis. Functionally, catalyzes the ATP-dependent conversion of 7-carboxy-7-deazaguanine (CDG) to 7-cyano-7-deazaguanine (preQ(0)). This is 7-cyano-7-deazaguanine synthase from Methanothrix thermoacetophila (strain DSM 6194 / JCM 14653 / NBRC 101360 / PT) (Methanosaeta thermophila).